The following is a 403-amino-acid chain: Arginine deiminase (403 aa).

The active-site Amidino-cysteine intermediate is the C388.

Belongs to the arginine deiminase family.

Its subcellular location is the cytoplasm. The enzyme catalyses L-arginine + H2O = L-citrulline + NH4(+). The protein operates within amino-acid degradation; L-arginine degradation via ADI pathway; carbamoyl phosphate from L-arginine: step 1/2. The protein is Arginine deiminase of Mycoplasma capricolum subsp. capricolum (strain California kid / ATCC 27343 / NCTC 10154).